A 197-amino-acid polypeptide reads, in one-letter code: Large ribosomal subunit protein bL25 (197 aa).

The protein belongs to the bacterial ribosomal protein bL25 family. CTC subfamily. In terms of assembly, part of the 50S ribosomal subunit; part of the 5S rRNA/L5/L18/L25 subcomplex. Contacts the 5S rRNA. Binds to the 5S rRNA independently of L5 and L18.

In terms of biological role, this is one of the proteins that binds to the 5S RNA in the ribosome where it forms part of the central protuberance. This chain is Large ribosomal subunit protein bL25, found in Carboxydothermus hydrogenoformans (strain ATCC BAA-161 / DSM 6008 / Z-2901).